Reading from the N-terminus, the 147-residue chain is Ribosome maturation factor RimP (147 aa).

Belongs to the RimP family.

Its subcellular location is the cytoplasm. Its function is as follows. Required for maturation of 30S ribosomal subunits. This chain is Ribosome maturation factor RimP, found in Sulfurihydrogenibium sp. (strain YO3AOP1).